The primary structure comprises 150 residues: Large ribosomal subunit protein uL13 (150 aa).

Residues 130-150 (EHPHGAQQPQPYQLNPSASIK) form a disordered region. A compositionally biased stretch (polar residues) spans 136–150 (QQPQPYQLNPSASIK).

Belongs to the universal ribosomal protein uL13 family. In terms of assembly, part of the 50S ribosomal subunit.

Its function is as follows. This protein is one of the early assembly proteins of the 50S ribosomal subunit, although it is not seen to bind rRNA by itself. It is important during the early stages of 50S assembly. The protein is Large ribosomal subunit protein uL13 of Synechococcus sp. (strain RCC307).